A 1080-amino-acid polypeptide reads, in one-letter code: Phycobiliprotein ApcE (1080 aa).

The tract at residues Q18–F76 is phycobilin-like 1. The phycobilin-like loop stretch occupies residues V77 to I144. Positions N145–K237 are phycobilin-like 2. C195 lines the (2R,3E)-phycocyanobilin pocket. 4 consecutive PBS-linker domains span residues D252–V432, L514–E693, P710–D888, and S922–N1080. The tract at residues G906–G930 is disordered.

The protein belongs to the phycobilisome linker protein family. Phycobilisomes of this organism are composed of a two cylinder core, from which six rods radiate. The core is mainly composed of allophycocyanin alpha and beta chains, and of three minor components: the allophycocyanin alpha-B chain, a 18.3 kDa polypeptide, and the anchor polypeptide L-CM. Post-translationally, contains one covalently linked bilin chromophore. This protein autochromophorylates.

It localises to the cellular thylakoid membrane. In terms of biological role, this protein is postulated to act both as terminal energy acceptor (by its phycobilin-like domains) and as a linker polypeptide (by its repeats and arms) that stabilizes the phycobilisome core architecture. Functionally, has intrinsic bilin lyase activity. The sequence is that of Phycobiliprotein ApcE (apcE) from Microchaete diplosiphon (Fremyella diplosiphon).